The sequence spans 433 residues: MIIMLFKKLSDVSEAEMQRLISRGSGLADVGDTVSAVLSDVRMKGDAALREYTKKFDKVELANFEVSEEEFEKALSEIGSELLGHLRIAAENIRAFHRAQMPETTWFMELQPGVVLGQKATPLESVGAYAPGGRASYPSTVLMTVIPARVAGVEQVIVCTPPRADGSVHPLTLAAAKVAGADKVFKLGGVQAIGAMAYGTETVPRVDKIVGPGNVFVTSAKMQVRDIAEIDFPAGPSEVLIIADESADAAMAASDIIAQAEHDPNAVSVLVTTSETLAEEVEQEVLAQAESTARSEIVKISLENAAVLIADSLDQCIDFSNKFAPEHLEIMVEDSDFVLDRIKNAGSIFIGNYAPVPVGDYASGTNHVLPTAGYAKIYSGLNINHFLKYSSIQKISKSGLESLKETVIALAEEEGLKAHADSIRARFGYRPSK.

Positions 129, 191, and 214 each coordinate NAD(+). Substrate is bound by residues Ser237, Gln259, and His262. Zn(2+)-binding residues include Gln259 and His262. Residues Glu326 and His327 each act as proton acceptor in the active site. His327, Asp360, Glu414, and His419 together coordinate substrate. Asp360 lines the Zn(2+) pocket. A Zn(2+)-binding site is contributed by His419.

Belongs to the histidinol dehydrogenase family. Zn(2+) is required as a cofactor.

The catalysed reaction is L-histidinol + 2 NAD(+) + H2O = L-histidine + 2 NADH + 3 H(+). It functions in the pathway amino-acid biosynthesis; L-histidine biosynthesis; L-histidine from 5-phospho-alpha-D-ribose 1-diphosphate: step 9/9. Functionally, catalyzes the sequential NAD-dependent oxidations of L-histidinol to L-histidinaldehyde and then to L-histidine. The protein is Histidinol dehydrogenase of Methanosarcina mazei (strain ATCC BAA-159 / DSM 3647 / Goe1 / Go1 / JCM 11833 / OCM 88) (Methanosarcina frisia).